A 422-amino-acid polypeptide reads, in one-letter code: Phosphoribosylamine--glycine ligase (422 aa).

The 206-residue stretch at 107 to 312 (KEVMAAAGVR…LGQLLYAAGT (206 aa)) folds into the ATP-grasp domain. Position 138-193 (138-193 (PPVGDLSWVVKDDRLAAGKGVVVTSDRDVARTHAAGLLEAGHPVLLESYLDGPEVS)) interacts with ATP. Residues Glu282 and Asn284 each coordinate Mg(2+).

The protein belongs to the GARS family. Mg(2+) is required as a cofactor. It depends on Mn(2+) as a cofactor.

The catalysed reaction is 5-phospho-beta-D-ribosylamine + glycine + ATP = N(1)-(5-phospho-beta-D-ribosyl)glycinamide + ADP + phosphate + H(+). Its pathway is purine metabolism; IMP biosynthesis via de novo pathway; N(1)-(5-phospho-D-ribosyl)glycinamide from 5-phospho-alpha-D-ribose 1-diphosphate: step 2/2. The protein is Phosphoribosylamine--glycine ligase of Mycobacterium leprae (strain TN).